A 59-amino-acid chain; its full sequence is Large ribosomal subunit protein bL32 (59 aa).

Positions 1–16 (MAVPKRKTSPSKRGMR) are enriched in basic residues. Positions 1–20 (MAVPKRKTSPSKRGMRRSHD) are disordered.

This sequence belongs to the bacterial ribosomal protein bL32 family.

The chain is Large ribosomal subunit protein bL32 from Sphingopyxis alaskensis (strain DSM 13593 / LMG 18877 / RB2256) (Sphingomonas alaskensis).